A 392-amino-acid polypeptide reads, in one-letter code: Putative F-box protein At1g71320 (392 aa).

Residues 8 to 55 (NPKTIFIPDDIAEGIFHHLPIKSLARFKVLSKKWTSMIESTYFSHKRL) enclose the F-box domain.

The sequence is that of Putative F-box protein At1g71320 from Arabidopsis thaliana (Mouse-ear cress).